The sequence spans 372 residues: MEGLSLLQLPRDKFRKSSFFVWVIILFQKAFSMPLGVVTNSTLEVTEIDQLVCKDHLASTDQLKSVGLNLEGSGVSTDIPSATKRWGFRSGVPPQVVSYEAGEWAENCYNLEIKKPDGSECLPPPPDGVRGFPRCRYVHKAQGTGPCPGDYAFHKDGAFFLYDRLASTVIYRGVNFAEGVIAFLILAKPKETFLQSPPIREAANYTENTSSYYATSYLEYEIENFGAQHSTTLFKINNNTFVLLDRPHTPQFLFQLNDTIQLHQQLSNTTGKLIWTLDANINADIGEWAFWENKKISPNNYVEKSCLSKLYRSTRQKTMMRHRRELQREESPTGPPGSIRTWFQRIPLGWFHCTYQKGKQHCRLRIRQKVEE.

Positions 1 to 32 are cleaved as a signal peptide; sequence MEGLSLLQLPRDKFRKSSFFVWVIILFQKAFS. Residue Asn40 is glycosylated (N-linked (GlcNAc...) asparagine; by host). Disulfide bonds link Cys108–Cys135 and Cys121–Cys147. N-linked (GlcNAc...) asparagine; by host glycans are attached at residues Asn204, Asn208, Asn238, Asn257, and Asn268. A disordered region spans residues 320-340; it reads MRHRRELQREESPTGPPGSIR.

This sequence belongs to the filoviruses glycoprotein family. As to quaternary structure, homodimer; disulfide-linked. The homodimers are linked by two disulfide bonds in a parallel orientation. In terms of assembly, monomer. Post-translationally, this precursor is processed into mature sGP and delta-peptide by host furin or furin-like proteases. The cleavage site corresponds to the furin optimal cleavage sequence [KR]-X-[KR]-R. N-glycosylated. In terms of processing, O-glycosylated.

It localises to the secreted. In terms of biological role, seems to possess an anti-inflammatory activity as it can reverse the barrier-decreasing effects of TNF alpha. Might therefore contribute to the lack of inflammatory reaction seen during infection in spite the of extensive necrosis and massive virus production. Does not seem to be involved in activation of primary macrophages. Does not seem to interact specifically with neutrophils. Its function is as follows. Viroporin that permeabilizes mammalian cell plasma membranes. It acts by altering permeation of ionic compounds and small molecules. This activity may lead to viral enterotoxic activity. The sequence is that of Pre-small/secreted glycoprotein (GP) from Sudan ebolavirus (strain Boniface-76) (SEBOV).